Reading from the N-terminus, the 430-residue chain is Putative golgin subfamily A member 8D (430 aa).

Residues 2–217 (EWKLEQSMRE…LTAQLSLMAL (216 aa)) adopt a coiled-coil conformation. Disordered stretches follow at residues 138–158 (LREQ…QEER), 217–239 (LPGE…RPMP), 290–331 (PITK…GVAA), and 382–406 (PVQG…QDHQ). Basic and acidic residues predominate over residues 222–235 (HGGEHLDSEGEEAP). Over residues 303–316 (PGGGHHQAGPGQGG) the composition is skewed to gly residues.

Belongs to the GOLGA8 family.

This chain is Putative golgin subfamily A member 8D (GOLGA8DP), found in Homo sapiens (Human).